Consider the following 298-residue polypeptide: uncharacterized protein (298 aa).

This is an uncharacterized protein from Archaeoglobus fulgidus (strain ATCC 49558 / DSM 4304 / JCM 9628 / NBRC 100126 / VC-16).